Consider the following 267-residue polypeptide: Extensin (267 aa).

The segment at 1–267 (MCPAFSIFFN…HTPSPPPPYY (267 aa)) is disordered. 13 consecutive repeats follow at residues 18–33 (PPTY…PKPT), 34–54 (PPTY…PKPT), 55–70 (PPTY…PKPT), 71–91 (PPTY…PKPT), 92–107 (PPTY…PKPT), 108–128 (PPTY…PKPT), 129–144 (PPTY…PKPT), 145–160 (PPTY…PKPT), 161–179 (PPTY…PKPT), 180–195 (PPTY…PKPT), 196–211 (PPTY…PKPT), 212–232 (PPTY…PKPT), and 233–253 (PPTY…YTPT). The segment at 18 to 253 (PPTYTPSPKP…ATKPPTYTPT (236 aa)) is highly repetitive. Residues 20–267 (TYTPSPKPPT…HTPSPPPPYY (248 aa)) are compositionally biased toward pro residues. The interval 261–265 (SPPPP) is extensin repetitive element.

Post-translationally, hydroxylated on proline residues in the S-P-P-P-P repeat. O-glycosylated on hydroxyprolines. Mainly in the coleoptile node and root tip.

It is found in the secreted. Its subcellular location is the primary cell wall. Structural component in primary cell wall. The polypeptide is Extensin (HRGP) (Zea mays (Maize)).